The chain runs to 341 residues: AB hydrolase superfamily protein C1039.03 (341 aa).

It belongs to the AB hydrolase superfamily.

The protein localises to the cytoplasm. Its subcellular location is the nucleus. The polypeptide is AB hydrolase superfamily protein C1039.03 (Schizosaccharomyces pombe (strain 972 / ATCC 24843) (Fission yeast)).